Consider the following 427-residue polypeptide: MSVSFEAKETNRGVLTFTIGQDAIKPELDRVFNKVKKDINLPGFRKGHLPRAVFNQKFGEEALYQDVVNALLPAAYEAAVAEAGLEVVAQPKIDVVSMEKGQDWTITAEVVTKPEVKLGDYKNLAVSVEATKEVTDEEVDAKIEAARNNLAELVIKEGPAAEGDTVVIDFVGSIDGVEFDGGKGENFSLGLGSGQFIPGFEAQLVGHAAGEEVNVEVTFPEDYQAADLAGKQALFVTKIHEVKAKEVPALDDELAKDIDEEVETLDELKAKYRKELEASKEVAFDDAVESAALELAVENAEIVELPEEMIHEEVHRAINEFLGGMQQQGISPDMYFQITGTTREDLHKQYEADAEKRTKTNLVVEAVAKAEGFEATEEEINKEIEDLAATYNMEVAQVRSLLSPEMLKHDIAVKKAVEVITSTATVK.

A PPIase FKBP-type domain is found at 163-248 (GDTVVIDFVG…IHEVKAKEVP (86 aa)).

Belongs to the FKBP-type PPIase family. Tig subfamily.

It is found in the cytoplasm. It catalyses the reaction [protein]-peptidylproline (omega=180) = [protein]-peptidylproline (omega=0). In terms of biological role, involved in protein export. Acts as a chaperone by maintaining the newly synthesized protein in an open conformation. Functions as a peptidyl-prolyl cis-trans isomerase. The chain is Trigger factor from Streptococcus suis (strain 05ZYH33).